Here is a 322-residue protein sequence, read N- to C-terminus: Acetyl-coenzyme A carboxylase carboxyl transferase subunit beta (322 aa).

In terms of domain architecture, CoA carboxyltransferase N-terminal spans 24–293 (LWIKCPDTGQ…PAVEEIAASD (270 aa)).

The protein belongs to the AccD/PCCB family. In terms of assembly, acetyl-CoA carboxylase is a heterohexamer composed of biotin carboxyl carrier protein (AccB), biotin carboxylase (AccC) and two subunits each of ACCase subunit alpha (AccA) and ACCase subunit beta (AccD).

The protein localises to the cytoplasm. It carries out the reaction N(6)-carboxybiotinyl-L-lysyl-[protein] + acetyl-CoA = N(6)-biotinyl-L-lysyl-[protein] + malonyl-CoA. The protein operates within lipid metabolism; malonyl-CoA biosynthesis; malonyl-CoA from acetyl-CoA: step 1/1. Component of the acetyl coenzyme A carboxylase (ACC) complex. Biotin carboxylase (BC) catalyzes the carboxylation of biotin on its carrier protein (BCCP) and then the CO(2) group is transferred by the transcarboxylase to acetyl-CoA to form malonyl-CoA. In Rhodopseudomonas palustris (strain BisB5), this protein is Acetyl-coenzyme A carboxylase carboxyl transferase subunit beta.